Here is a 270-residue protein sequence, read N- to C-terminus: MLLASPSTPSRGRTPSAVERLEADKAKYVKTHQVIARRQEPALRGGPGPLTPHTCNELGPPPSPRTPRPARRGSGRRLPRPDSLIFYRQKRDCKASVNKENAKGQGLVRRLFLGSPRDVASSSAGSSERPAAPGGWTAPQDAPEAAGKRALCPTCSLPLSEKERFFNYCGLERALVEVLGAERFSPQSWGADASPQPGTSPPPGSGDASDWTSSEGGADRRDGAEGGGSAAAGSERDGRPQVSVVERNARVIQWLYGCQRARGPPRESEV.

Residues 1–16 (MLLASPSTPSRGRTPS) are compositionally biased toward low complexity. 3 disordered regions span residues 1–83 (MLLA…RPDS), 117–142 (RDVA…PQDA), and 186–244 (PQSW…QVSV). The span at 68–78 (RPARRGSGRRL) shows a compositional bias: basic residues.

This sequence belongs to the FAM110 family.

This Bos taurus (Bovine) protein is Protein FAM110D (FAM110D).